Here is a 349-residue protein sequence, read N- to C-terminus: tRNA pseudouridine synthase D (349 aa).

Phe-27 is a binding site for substrate. Asp-80 (nucleophile) is an active-site residue. Residue Asn-129 coordinates substrate. The region spanning 155-303 is the TRUD domain; it reads GVPNYFGAQR…VEAARRAMLL (149 aa). Phe-329 lines the substrate pocket.

The protein belongs to the pseudouridine synthase TruD family.

It catalyses the reaction uridine(13) in tRNA = pseudouridine(13) in tRNA. Responsible for synthesis of pseudouridine from uracil-13 in transfer RNAs. This Escherichia coli (strain SE11) protein is tRNA pseudouridine synthase D.